Here is a 174-residue protein sequence, read N- to C-terminus: Interferon gamma (174 aa).

A signal peptide spans 1–23 (MHTTRCILALLLCLTQAMSGCYC). Q24 is subject to Pyrrolidone carboxylic acid. N-linked (GlcNAc...) asparagine glycans are attached at residues N39 and N106.

Belongs to the type II (or gamma) interferon family. As to quaternary structure, homodimer. Interacts with IFNGR1 (via extracellular domain); this interaction promotes IFNGR1 dimerization. Released primarily from activated T lymphocytes.

Its subcellular location is the secreted. Its function is as follows. Type II interferon produced by immune cells such as T-cells and NK cells that plays crucial roles in antimicrobial, antiviral, and antitumor responses by activating effector immune cells and enhancing antigen presentation. Primarily signals through the JAK-STAT pathway after interaction with its receptor IFNGR1 to affect gene regulation. Upon IFNG binding, IFNGR1 intracellular domain opens out to allow association of downstream signaling components JAK2, JAK1 and STAT1, leading to STAT1 activation, nuclear translocation and transcription of IFNG-regulated genes. Many of the induced genes are transcription factors such as IRF1 that are able to further drive regulation of a next wave of transcription. Plays a role in class I antigen presentation pathway by inducing a replacement of catalytic proteasome subunits with immunoproteasome subunits. In turn, increases the quantity, quality, and repertoire of peptides for class I MHC loading. Increases the efficiency of peptide generation also by inducing the expression of activator PA28 that associates with the proteasome and alters its proteolytic cleavage preference. Up-regulates as well MHC II complexes on the cell surface by promoting expression of several key molecules such as cathepsins B/CTSB, H/CTSH, and L/CTSL. Participates in the regulation of hematopoietic stem cells during development and under homeostatic conditions by affecting their development, quiescence, and differentiation. This chain is Interferon gamma (IFNG), found in Mesocricetus auratus (Golden hamster).